The primary structure comprises 952 residues: MTDTLDLKLSSRRQWNPVRCPVRLEVDGSAQTPTSLVQTALNNPSFDLVIAAPNGQNVYIPFTEDRKLFTANIADDPSTSSLISHCHFEGVTEDGRHALSLCDPGEITGLLMTQTNRFGLSTSNNGSFVLIPYVENNCDLGSLVHSSSRKKRQIGKQNTVIDRNPSYIREHLDGRKRFVELALVADYSVYTKYDSDEKKVNDYMQQTMNILNSLYFPLNIRITLVHSEIWKKGDQISVIPDSKETLNNFMEYKKIMLKDHFFDTGYLMTTLKFDEGVVGKAYKGTMCSYDYSGGIYVDHNNDTVETVATFAHELGHTFGMDHDPNDKDVCYCPMPRCIMNPQSGHMEVWSECSVKNLASGFNRGIDLCLFNEPGKKPSDAKCGNGIVEPGEECDCGPLKCDNHCCNGSTCKLIGEAECASGDCCDLKTCKPKPRATVCRAAIGICDLDEYCNGETNDCPADFFVQNAALCPGKENEFCYEGGCGSRNDQCAKLWGPTGKNGDENCYRKNTEGTFHGNCGTNAHTKEIKKCETENAKCGLLQCETQAERPVFGDPGSVTFSHSTVYSSLKRDDKKFCYVFKSAYGGLNAPDPGLVPDGAICGEEQMCIGQKCHKKEKISKVTAQCLDNCNFRGVCNNVGNCHCERGFGGIACEIPGYGGSVNSNEAYRFRGITLSSTFLVFFCLFGIFIGGLCVYYRVKRKRNLVSEWWSVVKKKFDLHGDLVPVRKAPPPPYAQRIRQSFTAMWGEDHSHVAVAQPAHPRNCYNSCCRQPPRFDPPSIPMVTLKNPNLASPTPLLNPAEKEEQNQERATHQHVELYPVAESFRSDSAASFNTRTGSFRPNVQPPPVPRPSDDVLSKLNEDLAKEKNAKFDRLNKTLPLPPPLPKEKPKTASSTSLRRNESIRPEQAPPPPPPAHAKPTLPTKQPKVSEDAAATEEKVDVRSMAAIFDQKLKK.

Residues 1 to 672 (MTDTLDLKLS…NEAYRFRGIT (672 aa)) lie on the Extracellular side of the membrane. N-linked (GlcNAc...) asparagine glycans are attached at residues N125 and N301. One can recognise a Peptidase M12B domain in the interval 177–373 (RFVELALVAD…GIDLCLFNEP (197 aa)). 3 disulfides stabilise this stretch: C287–C368, C330–C352, and C332–C337. H312 serves as a coordination point for Zn(2+). The active site involves E313. Residues H316 and H322 each contribute to the Zn(2+) site. The Disintegrin domain maps to 379 to 466 (DAKCGNGIVE…DCPADFFVQN (88 aa)). An N-linked (GlcNAc...) asparagine glycan is attached at N406. 4 cysteine pairs are disulfide-bonded: C438/C458, C624/C634, C628/C640, and C642/C651. Residues 620 to 652 (VTAQCLDNCNFRGVCNNVGNCHCERGFGGIACE) enclose the EGF-like domain. The helical transmembrane segment at 673–693 (LSSTFLVFFCLFGIFIGGLCV) threads the bilayer. The Cytoplasmic portion of the chain corresponds to 694 to 952 (YYRVKRKRNL…AAIFDQKLKK (259 aa)). Disordered stretches follow at residues 778–809 (IPMV…ERAT) and 829–938 (SFNT…EKVD). 2 stretches are compositionally biased toward basic and acidic residues: residues 798–809 (AEKEEQNQERAT) and 849–873 (PSDD…DRLN). Residues 905-914 (QAPPPPPPAH) are compositionally biased toward pro residues. Basic and acidic residues predominate over residues 925–938 (KVSEDAAATEEKVD).

Zn(2+) is required as a cofactor. In terms of tissue distribution, expressed in hyp7 large epidermal syncytium (punctate distribution), seam cell syncytia, anterior epidermis, neurons located in the head, tail and central body, proximal oogenic cells (levels increasing in maturing oocytes) and myoepithelial cells of the spermatheca (at protein level). Not detected in mature sperm cells.

The protein localises to the cell membrane. It is found in the endosome membrane. The protein resides in the lysosome membrane. Metalloprotease that cleaves and releases a number of molecules. Negative regulator of lrp-1 protein levels, potentially by influencing its endosomal trafficking. Involved in regulating the molting process. This is Disintegrin and metalloproteinase domain-containing protein adm-2 from Caenorhabditis elegans.